The sequence spans 202 residues: Small ribosomal subunit protein uS4c (202 aa).

One can recognise an S4 RNA-binding domain in the interval 90 to 158 (MRLDNIIFRL…ITKNIELSQK (69 aa)).

It belongs to the universal ribosomal protein uS4 family. As to quaternary structure, part of the 30S ribosomal subunit. Contacts protein S5. The interaction surface between S4 and S5 is involved in control of translational fidelity.

It localises to the plastid. The protein resides in the chloroplast. In terms of biological role, one of the primary rRNA binding proteins, it binds directly to 16S rRNA where it nucleates assembly of the body of the 30S subunit. Its function is as follows. With S5 and S12 plays an important role in translational accuracy. This chain is Small ribosomal subunit protein uS4c (rps4), found in Marchantia romanica (Liverwort).